Here is a 102-residue protein sequence, read N- to C-terminus: Large ribosomal subunit protein bL21 (102 aa).

This sequence belongs to the bacterial ribosomal protein bL21 family. In terms of assembly, part of the 50S ribosomal subunit. Contacts protein L20.

This protein binds to 23S rRNA in the presence of protein L20. The protein is Large ribosomal subunit protein bL21 of Pseudarthrobacter chlorophenolicus (strain ATCC 700700 / DSM 12829 / CIP 107037 / JCM 12360 / KCTC 9906 / NCIMB 13794 / A6) (Arthrobacter chlorophenolicus).